The chain runs to 251 residues: Small ribosomal subunit protein uS3 (251 aa).

Positions 39-109 (IRNYVQARLK…EVKIDVIEVI (71 aa)) constitute a KH type-2 domain. Over residues 222-239 (LKKIKDRRGEQRSRGRDS) the composition is skewed to basic and acidic residues. The segment at 222 to 251 (LKKIKDRRGEQRSRGRDSRNRRRRKPRQTT) is disordered. The span at 240–251 (RNRRRRKPRQTT) shows a compositional bias: basic residues.

This sequence belongs to the universal ribosomal protein uS3 family. In terms of assembly, part of the 30S ribosomal subunit. Forms a tight complex with proteins S10 and S14.

Its function is as follows. Binds the lower part of the 30S subunit head. Binds mRNA in the 70S ribosome, positioning it for translation. This chain is Small ribosomal subunit protein uS3, found in Prosthecochloris aestuarii (strain DSM 271 / SK 413).